The chain runs to 138 residues: Trypsin inhibitor DE5 alpha chain (138 aa).

Cys40 and Cys86 are joined by a disulfide.

The protein belongs to the protease inhibitor I3 (leguminous Kunitz-type inhibitor) family. Heterodimer of an alpha and a beta chain linked by a disulfide bond.

Inhibition of trypsin. This is Trypsin inhibitor DE5 alpha chain from Adenanthera pavonina (Sandal bead tree).